Here is a 174-residue protein sequence, read N- to C-terminus: NADH-quinone oxidoreductase subunit I (174 aa).

2 consecutive 4Fe-4S ferredoxin-type domains span residues 44–74 (LNRYPDGLEKCIGCELCAWACPADAIYVEGD) and 90–119 (RVYQINYLRCIGCGLCIEACPTRALTMTND). [4Fe-4S] cluster contacts are provided by Cys-54, Cys-57, Cys-60, Cys-64, Cys-99, Cys-102, Cys-105, and Cys-109.

Belongs to the complex I 23 kDa subunit family. NDH-1 is composed of 14 different subunits. Subunits NuoA, H, J, K, L, M, N constitute the membrane sector of the complex. The cofactor is [4Fe-4S] cluster.

Its subcellular location is the cell membrane. The enzyme catalyses a quinone + NADH + 5 H(+)(in) = a quinol + NAD(+) + 4 H(+)(out). NDH-1 shuttles electrons from NADH, via FMN and iron-sulfur (Fe-S) centers, to quinones in the respiratory chain. The immediate electron acceptor for the enzyme in this species is believed to be menaquinone. Couples the redox reaction to proton translocation (for every two electrons transferred, four hydrogen ions are translocated across the cytoplasmic membrane), and thus conserves the redox energy in a proton gradient. This is NADH-quinone oxidoreductase subunit I from Mycobacterium sp. (strain KMS).